Here is a 156-residue protein sequence, read N- to C-terminus: Small ribosomal subunit protein uS7 (156 aa).

Belongs to the universal ribosomal protein uS7 family. In terms of assembly, part of the 30S ribosomal subunit. Contacts proteins S9 and S11.

Functionally, one of the primary rRNA binding proteins, it binds directly to 16S rRNA where it nucleates assembly of the head domain of the 30S subunit. Is located at the subunit interface close to the decoding center, probably blocks exit of the E-site tRNA. The polypeptide is Small ribosomal subunit protein uS7 (Polynucleobacter asymbioticus (strain DSM 18221 / CIP 109841 / QLW-P1DMWA-1) (Polynucleobacter necessarius subsp. asymbioticus)).